Here is a 354-residue protein sequence, read N- to C-terminus: MAELKNDRYLRALLKEPVDVTPVWMMRQAGRYLPEYKATRAQAGDFMSLCKNHELACEVTLQPLRRYDLDAAILFSDILTVPDAMGLGLYFEAGEGPRFERPTDTIDAIKKLSIPDPEDELGYVMKAVSTIRRELNGAVPLIGFSGSPWTLATYMVEGGSSKTFEKIKKMAYAEPMALHMLLDKLADSVILYLNAQVANGAQSLMIFDSWGGALSHSAYREFSLRYMQKIIDGLTRFADGRKVPVTLFTKGGGLWLEAMAETGCDALGLDWTVDIADARRRVGHKVALQGNMDPSMLYAPIPRIEEEVGHILAGYGEGTGHVFNLGHGIHQHVDPEHAGAFIKAVHAQSKRYHK.

Residues R27–R31, D77, Y154, S209, and H327 contribute to the substrate site.

The protein belongs to the uroporphyrinogen decarboxylase family. Homodimer.

It is found in the cytoplasm. The catalysed reaction is uroporphyrinogen III + 4 H(+) = coproporphyrinogen III + 4 CO2. The protein operates within porphyrin-containing compound metabolism; protoporphyrin-IX biosynthesis; coproporphyrinogen-III from 5-aminolevulinate: step 4/4. Functionally, catalyzes the decarboxylation of four acetate groups of uroporphyrinogen-III to yield coproporphyrinogen-III. This Shewanella baltica (strain OS223) protein is Uroporphyrinogen decarboxylase.